Here is a 260-residue protein sequence, read N- to C-terminus: Phosphate import ATP-binding protein PstB (260 aa).

The region spanning 14 to 255 is the ABC transporter domain; the sequence is IETENLNLFY…PKNTKTEEYI (242 aa). Residue 46–53 coordinates ATP; that stretch reads GPSGCGKS.

It belongs to the ABC transporter superfamily. Phosphate importer (TC 3.A.1.7) family. In terms of assembly, the complex is composed of two ATP-binding proteins (PstB), two transmembrane proteins (PstC and PstA) and a solute-binding protein (PstS).

The protein localises to the cell inner membrane. It carries out the reaction phosphate(out) + ATP + H2O = ADP + 2 phosphate(in) + H(+). Part of the ABC transporter complex PstSACB involved in phosphate import. Responsible for energy coupling to the transport system. This Borreliella burgdorferi (strain ATCC 35210 / DSM 4680 / CIP 102532 / B31) (Borrelia burgdorferi) protein is Phosphate import ATP-binding protein PstB.